Here is a 249-residue protein sequence, read N- to C-terminus: uncharacterized protein (249 aa).

One can recognise an S4 RNA-binding domain in the interval 7-64 (PRVHVFLAEKGVGSRRFCEELIRKKLVRVNNTIAKLGDKVTLGDRIIYKKQIFVFKDF). D112 (nucleophile) is an active-site residue.

Belongs to the pseudouridine synthase RsuA family.

The catalysed reaction is a uridine in RNA = a pseudouridine in RNA. This is an uncharacterized protein from Borreliella burgdorferi (strain ATCC 35210 / DSM 4680 / CIP 102532 / B31) (Borrelia burgdorferi).